The primary structure comprises 407 residues: 1-deoxy-D-xylulose 5-phosphate reductoisomerase (407 aa).

6 residues coordinate NADPH: Thr25, Gly26, Ser27, Ile28, Asn53, and Asn136. Lys137 contacts 1-deoxy-D-xylulose 5-phosphate. Position 138 (Glu138) interacts with NADPH. Position 162 (Asp162) interacts with Mn(2+). 4 residues coordinate 1-deoxy-D-xylulose 5-phosphate: Ser163, Glu164, Ser188, and His211. Mn(2+) is bound at residue Glu164. Position 217 (Gly217) interacts with NADPH. 1-deoxy-D-xylulose 5-phosphate is bound by residues Ser224, Asn229, Lys230, and Glu233. Glu233 serves as a coordination point for Mn(2+).

It belongs to the DXR family. Mg(2+) serves as cofactor. Mn(2+) is required as a cofactor.

The catalysed reaction is 2-C-methyl-D-erythritol 4-phosphate + NADP(+) = 1-deoxy-D-xylulose 5-phosphate + NADPH + H(+). Its pathway is isoprenoid biosynthesis; isopentenyl diphosphate biosynthesis via DXP pathway; isopentenyl diphosphate from 1-deoxy-D-xylulose 5-phosphate: step 1/6. Functionally, catalyzes the NADPH-dependent rearrangement and reduction of 1-deoxy-D-xylulose-5-phosphate (DXP) to 2-C-methyl-D-erythritol 4-phosphate (MEP). This chain is 1-deoxy-D-xylulose 5-phosphate reductoisomerase, found in Nitrobacter winogradskyi (strain ATCC 25391 / DSM 10237 / CIP 104748 / NCIMB 11846 / Nb-255).